We begin with the raw amino-acid sequence, 81 residues long: Putative defensin-like protein 56 (81 aa).

Positions 1-23 (MNITKAYVIFFLVVILTNSLSNS) are cleaved as a signal peptide. Cystine bridges form between cysteine 46/cysteine 80, cysteine 50/cysteine 73, cysteine 59/cysteine 78, and cysteine 63/cysteine 79.

Belongs to the DEFL family.

Its subcellular location is the secreted. In Arabidopsis thaliana (Mouse-ear cress), this protein is Putative defensin-like protein 56.